Reading from the N-terminus, the 278-residue chain is Gasdermin-like protein het-Q1 (278 aa).

This sequence belongs to the gasdermin family. As to quaternary structure, homooligomer; forms a homooligomeric ring-shaped pore complex when inserted in the membrane. In terms of processing, the precursor form is cleaved by het-Q2, generating the pore-forming protein (Gasdermin-like protein het-Q1, N-terminal).

The protein resides in the cell membrane. Gasdermin-like protein involved in heterokaryon incompatibility, a process that ensures that during spontaneous vegetative cell fusion, only compatible cells from the same colony survive (non-self-recognition). In P.anserina, the het-q locus exists as 2 incompatible alleles, het-Q1 (this entry) and het-Q2 (AC P0DW09). This form constitutes the precursor of the pore-forming protein: during the allorecognition process, it is cleaved by het-Q2, releasing the N-terminal moiety (Gasdermin-like protein het-Q1, N-terminal) that binds to membranes and forms pores, triggering cell death. Functionally, pore-forming protein that causes membrane permeabilization and cell death. Released upon cleavage and maturation by het-Q2 and binds to membrane inner leaflet lipids. Homooligomerizes within the membrane and forms pores of 10-15 nanometers (nm) of inner diameter, triggering cell death. The protein is Gasdermin-like protein het-Q1 of Podospora anserina (strain S / ATCC MYA-4624 / DSM 980 / FGSC 10383) (Pleurage anserina).